We begin with the raw amino-acid sequence, 651 residues long: Acetyl-coenzyme A synthetase (651 aa).

CoA contacts are provided by residues 189–192 (RGGK), T311, and N335. Residues 387–389 (GEP), 411–416 (DTWWQT), D500, and R515 contribute to the ATP site. A CoA-binding site is contributed by S523. R526 contributes to the ATP binding site. Mg(2+) contacts are provided by V537, H539, and V542. Residue R584 coordinates CoA. Residue K609 is modified to N6-acetyllysine.

Belongs to the ATP-dependent AMP-binding enzyme family. Mg(2+) serves as cofactor. In terms of processing, acetylated. Deacetylation by the SIR2-homolog deacetylase activates the enzyme.

It carries out the reaction acetate + ATP + CoA = acetyl-CoA + AMP + diphosphate. Catalyzes the conversion of acetate into acetyl-CoA (AcCoA), an essential intermediate at the junction of anabolic and catabolic pathways. AcsA undergoes a two-step reaction. In the first half reaction, AcsA combines acetate with ATP to form acetyl-adenylate (AcAMP) intermediate. In the second half reaction, it can then transfer the acetyl group from AcAMP to the sulfhydryl group of CoA, forming the product AcCoA. The sequence is that of Acetyl-coenzyme A synthetase from Rhizobium etli (strain CIAT 652).